The chain runs to 407 residues: 1-deoxy-D-xylulose 5-phosphate reductoisomerase (407 aa).

The NADPH site is built by Thr-25, Gly-26, Ser-27, Ile-28, Asn-53, and Asn-136. Lys-137 contributes to the 1-deoxy-D-xylulose 5-phosphate binding site. Residue Glu-138 coordinates NADPH. Asp-162 lines the Mn(2+) pocket. 1-deoxy-D-xylulose 5-phosphate contacts are provided by Ser-163, Glu-164, Ser-188, and His-211. Glu-164 contacts Mn(2+). NADPH is bound at residue Gly-217. Positions 224, 229, 230, and 233 each coordinate 1-deoxy-D-xylulose 5-phosphate. Mn(2+) is bound at residue Glu-233.

It belongs to the DXR family. Mg(2+) is required as a cofactor. Requires Mn(2+) as cofactor.

It carries out the reaction 2-C-methyl-D-erythritol 4-phosphate + NADP(+) = 1-deoxy-D-xylulose 5-phosphate + NADPH + H(+). It participates in isoprenoid biosynthesis; isopentenyl diphosphate biosynthesis via DXP pathway; isopentenyl diphosphate from 1-deoxy-D-xylulose 5-phosphate: step 1/6. Its function is as follows. Catalyzes the NADPH-dependent rearrangement and reduction of 1-deoxy-D-xylulose-5-phosphate (DXP) to 2-C-methyl-D-erythritol 4-phosphate (MEP). The polypeptide is 1-deoxy-D-xylulose 5-phosphate reductoisomerase (Rhodopseudomonas palustris (strain BisB18)).